Consider the following 542-residue polypeptide: uncharacterized protein (542 aa).

Over 1–78 (MSVQKEEYDI…EEKKLVRKMD (78 aa)) the chain is Extracellular. Residues 79–99 (LKIFLWVFIMFAFLDLIRKNI) form a helical membrane-spanning segment. The Cytoplasmic portion of the chain corresponds to 100–119 (ARAVSDNFIVDLKMNTNDYN). Residues 120-140 (LGQTVYLVIFLASELPGNLLS) traverse the membrane as a helical segment. The Extracellular segment spans residues 141–147 (KRFGPER). The chain crosses the membrane as a helical span at residues 148–168 (VIPVQIVLWSVICITQAGLKN). Residues 169–176 (RGQFIATR) are Cytoplasmic-facing. The helical transmembrane segment at 177–197 (CLLGMVQGGFIPDNILYLSYY) threads the bilayer. Residues 198 to 208 (YTGAELTFRLS) lie on the Extracellular side of the membrane. A helical transmembrane segment spans residues 209 to 229 (FFWCAIPLFQILGSLLASGII). The Cytoplasmic segment spans residues 230 to 241 (EMRGIHNLAGWQ). Residues 242–262 (YLFIIEGFLSLSVGVASFYLM) form a helical membrane-spanning segment. Residues 263-326 (RRGPTQTGES…TLTEFDLWPL (64 aa)) lie on the Extracellular side of the membrane. The chain crosses the membrane as a helical span at residues 327-347 (FIQGITAFISLQTVGSYLSLI). The Cytoplasmic segment spans residues 348–359 (LKSLNYSTFLSN). A helical membrane pass occupies residues 360–380 (ILAIPGQALLLINLPLAALLS). The Extracellular portion of the chain corresponds to 381–387 (RKLKEKS). A helical membrane pass occupies residues 388 to 408 (LCVGIANVWVLPFIVSLVALP). Topologically, residues 409–416 (TDTNPWIK) are cytoplasmic. A helical membrane pass occupies residues 417–437 (YILLTGILGLPYTHSILAGWV). Topologically, residues 438–482 (SEISNSVRSRTVGTALYNMSAQVGAIIASNMYRNDDKPYYTRGNK) are extracellular. Residues 483 to 503 (ILLGFTCFNICMAVATKFYYI) form a helical membrane-spanning segment. The Cytoplasmic portion of the chain corresponds to 504–542 (SRNKYKDRKWNSMTKEEQINYLDTTKDKGMKRLDYRFIH).

This sequence belongs to the major facilitator superfamily. Allantoate permease family.

Its subcellular location is the membrane. This is an uncharacterized protein from Saccharomyces cerevisiae (strain ATCC 204508 / S288c) (Baker's yeast).